The following is a 304-amino-acid chain: Sperm microtubule inner protein 6 (304 aa).

The protein belongs to the SPMIP6 family. As to quaternary structure, microtubule inner protein component of sperm flagellar doublet microtubules. Interacts with alpha-tubulin.

Its subcellular location is the cytoplasm. It is found in the cytoskeleton. The protein localises to the nucleus. The protein resides in the mitochondrion. It localises to the flagellum axoneme. May participate in intramanchette transport and midpiece formation of the sperm tail. May play a potential role in somatic cell proliferation. The protein is Sperm microtubule inner protein 6 (SPMIP6) of Bos taurus (Bovine).